Here is a 435-residue protein sequence, read N- to C-terminus: Ribosomal protein uS12 methylthiotransferase RimO (435 aa).

The MTTase N-terminal domain occupies 3–113 (HKVGFVSLGC…VVNAVHQYLP (111 aa)). [4Fe-4S] cluster is bound by residues Cys12, Cys48, Cys77, Cys144, Cys148, and Cys151. The Radical SAM core domain occupies 130 to 367 (LTPRHYAYLK…MQVQAEISRN (238 aa)). In terms of domain architecture, TRAM spans 370–435 (KNKIGSTQTV…DDYDLYASLV (66 aa)).

It belongs to the methylthiotransferase family. RimO subfamily. [4Fe-4S] cluster is required as a cofactor.

It is found in the cytoplasm. The enzyme catalyses L-aspartate(89)-[ribosomal protein uS12]-hydrogen + (sulfur carrier)-SH + AH2 + 2 S-adenosyl-L-methionine = 3-methylsulfanyl-L-aspartate(89)-[ribosomal protein uS12]-hydrogen + (sulfur carrier)-H + 5'-deoxyadenosine + L-methionine + A + S-adenosyl-L-homocysteine + 2 H(+). Functionally, catalyzes the methylthiolation of an aspartic acid residue of ribosomal protein uS12. The chain is Ribosomal protein uS12 methylthiotransferase RimO from Legionella pneumophila subsp. pneumophila (strain Philadelphia 1 / ATCC 33152 / DSM 7513).